The sequence spans 124 residues: Holo-[acyl-carrier-protein] synthase (124 aa).

2 residues coordinate Mg(2+): aspartate 8 and glutamate 57.

Belongs to the P-Pant transferase superfamily. AcpS family. The cofactor is Mg(2+).

It is found in the cytoplasm. It carries out the reaction apo-[ACP] + CoA = holo-[ACP] + adenosine 3',5'-bisphosphate + H(+). Functionally, transfers the 4'-phosphopantetheine moiety from coenzyme A to a Ser of acyl-carrier-protein. In Leptospira borgpetersenii serovar Hardjo-bovis (strain JB197), this protein is Holo-[acyl-carrier-protein] synthase.